A 601-amino-acid chain; its full sequence is MSTISIHHVGILRNPLHSKSKRASINKPWSLSLPRSSSASRLVEPCRVSSKTDTKPAEITRRSGNYEPSLWDFDFIQSLDNHHPYVKEKQLKREEELIVQVKMLLGTKMEAVKQLELIDDLKNLGLSYFFRDEIKTILTSIYNNSFENKNNQVGDLYFTSLGFRLLRQHGFNVSQDIFDCFKNEKGSDFDETLIGEDTKATLQLYEVSFHLREGENTLELARQISTKYLQKQVNEGRISDENLSLWIRHSLDLPLHWRIQRLEARWFLDAYAAREDKNPLIFKLAKLDFNIIQATQQEELKEVSRWWNDSCLAEKLPFVRDRVVESYFWGVGLFEGHEFGYQRKLTAAYILLISAIDDVYDVYGTLDELRLFTDVFRRWDTESIDQLPYYMQLCYLALHNYVSGVAYDILKDHRRNTIPYLQETWVELVEAYMKEAEWYQSGYTPSLEEYLTIAKISIGSLPILLSVELSLPDSTIDRATFDRRHKMFYLSATVSRLADDLGTAPSELERGDVPKAIQCYMKDTNASEEEAQGHVRFMIREAWKELNTAMAEPDDCPFTEQVVEATANIGRAAQYIYREGDGHGHFQIRQHVRNLFFHPYV.

A chloroplast-targeting transit peptide spans 1 to 47 (MSTISIHHVGILRNPLHSKSKRASINKPWSLSLPRSSSASRLVEPCR). Residues Asp-357 and Asp-361 each coordinate Mn(2+). Residues 357–361 (DDVYD) carry the DDXXD motif motif. Homodimerization stretches follow at residues 363–369 (YGTLDEL) and 435–471 (EAEW…ELSL). Mn(2+) contacts are provided by Asp-499 and Glu-507.

Belongs to the terpene synthase family. As to quaternary structure, homodimer. It depends on Mn(2+) as a cofactor. Mg(2+) serves as cofactor.

It is found in the plastid. The protein localises to the chloroplast. It carries out the reaction (2E)-geranyl diphosphate + H2O = (S)-alpha-terpineol + diphosphate. It catalyses the reaction (2E)-geranyl diphosphate + H2O = (R)-alpha-terpineol + diphosphate. The protein operates within secondary metabolite biosynthesis; terpenoid biosynthesis. Functionally, involved in the biosynthesis of phenolic monoterpenes natural products. Monoterpene synthase which catalyzes the conversion of geranyl diphosphate (GPP) to alpha-terpineol (isomer is not determined). The protein is Alpha-terpineol synthase, chloroplastic of Thymus caespititius (Cretan thyme).